The chain runs to 275 residues: Membrane protein insertase YidC 1 (275 aa).

A signal peptide spans 1 to 25 (MRKVLRVKKNIKIARIVPLVLLLVA). A lipid anchor (N-palmitoyl cysteine) is attached at Cys26. A lipid anchor (S-diacylglycerol cysteine) is attached at Cys26. The next 5 helical transmembrane spans lie at 58 to 78 (SIGV…MPLF), 129 to 149 (YASL…FQAL), 171 to 191 (LYLL…LTNL), 198 to 216 (VMMT…FMGF), and 222 to 240 (VVLY…LLLL).

Belongs to the OXA1/ALB3/YidC family. Type 2 subfamily.

Its subcellular location is the cell membrane. Functionally, required for the insertion and/or proper folding and/or complex formation of integral membrane proteins into the membrane. Involved in integration of membrane proteins that insert both dependently and independently of the Sec translocase complex, as well as at least some lipoproteins. The protein is Membrane protein insertase YidC 1 of Streptococcus pyogenes serotype M6 (strain ATCC BAA-946 / MGAS10394).